A 176-amino-acid chain; its full sequence is Corrinoid adenosyltransferase (176 aa).

ATP-binding positions include 6–14 (TRTGDNGTT), lysine 24, 131–136 (RRLERI), and asparagine 155.

This sequence belongs to the Cob(I)alamin adenosyltransferase family.

The protein resides in the cytoplasm. It carries out the reaction 2 cob(II)yrinate a,c diamide + reduced [electron-transfer flavoprotein] + 2 ATP = 2 adenosylcob(III)yrinate a,c-diamide + 2 triphosphate + oxidized [electron-transfer flavoprotein] + 3 H(+). It catalyses the reaction 2 cob(II)alamin + reduced [electron-transfer flavoprotein] + 2 ATP = 2 adenosylcob(III)alamin + 2 triphosphate + oxidized [electron-transfer flavoprotein] + 3 H(+). The protein operates within cofactor biosynthesis; adenosylcobalamin biosynthesis; adenosylcobalamin from cob(II)yrinate a,c-diamide: step 2/7. This chain is Corrinoid adenosyltransferase, found in Citrobacter freundii.